Reading from the N-terminus, the 853-residue chain is Aryl hydrocarbon receptor (853 aa).

The propeptide occupies 1–9; the sequence is MSSGANITY. A disordered region spans residues 1–38; sequence MSSGANITYASRKRRKPVQKTVKPVPAEGIKSNPSKRH. 2 consecutive short sequence motifs (nuclear localization signal) follow at residues 12–15 and 36–41; these read RKRR and KRHRDR. Residues 26 to 79 enclose the bHLH domain; sequence PAEGIKSNPSKRHRDRLNTELDRLASLLPFPQDVINKLDKLSVLRLSVSYLRAK. Positions 37–65 are DNA-binding; it reads RHRDRLNTELDRLASLLPFPQDVINKLDK. 3 required for maintaining the overall integrity of the AHR:ARNT heterodimer and its transcriptional activity regions span residues 49 to 81, 116 to 124, and 264 to 266; these read LASL…AKSF, LLQALNGFV, and FAI. The short motif at 63-71 is the Nuclear export signal element; it reads LDKLSVLRL. One can recognise a PAS 1 domain in the interval 116 to 179; sequence LLQALNGFVL…RQLHWALNPS (64 aa). Residues 273 to 340 enclose the PAS 2 domain; the sequence is PSILEIRTKN…CAESHIRMIK (68 aa). One can recognise a PAC domain in the interval 346–384; that stretch reads MTVFRLLAKHSRWRWVQSNARLIYRNGRPDYIIATQRPL. A disordered region spans residues 429–451; it reads TKSNTSRKDWAPQSTPSKDSFHP. A compositionally biased stretch (polar residues) spans 440-451; the sequence is PQSTPSKDSFHP.

As to quaternary structure, homodimer. Heterodimer; efficient DNA binding requires dimerization with another bHLH protein. Interacts with ARNT; the heterodimer ARNT:AHR binds to core DNA sequence 5'-TGCGTG-3' within the dioxin response element (DRE) of target gene promoters and activates their transcription. Binds MYBBP1A. Interacts with coactivators including SRC-1, RIP140 and NOCA7, and with the corepressor SMRT. Interacts with NEDD8 and IVNS1ABP. Interacts with BMAL1. Interacts with HSP90AB1. Interacts with TIPARP; leading to mono-ADP-ribosylation of AHR and subsequent inhibition of AHR. Post-translationally, mono-ADP-ribosylated, leading to inhibit transcription activator activity of AHR. Expressed in all tissues tested including brain, heart, kidney, liver, lung, spleen, skeletal muscle and thymus.

Its subcellular location is the cytoplasm. The protein resides in the nucleus. In terms of biological role, ligand-activated transcription factor that enables cells to adapt to changing conditions by sensing compounds from the environment, diet, microbiome and cellular metabolism, and which plays important roles in development, immunity and cancer. Upon ligand binding, translocates into the nucleus, where it heterodimerizes with ARNT and induces transcription by binding to xenobiotic response elements (XRE). Regulates a variety of biological processes, including angiogenesis, hematopoiesis, drug and lipid metabolism, cell motility and immune modulation. Xenobiotics can act as ligands: upon xenobiotic-binding, activates the expression of multiple phase I and II xenobiotic chemical metabolizing enzyme genes (such as the CYP1A1 gene). Mediates biochemical and toxic effects of halogenated aromatic hydrocarbons. Next to xenobiotics, natural ligands derived from plants, microbiota, and endogenous metabolism are potent AHR agonists. Tryptophan (Trp) derivatives constitute an important class of endogenous AHR ligands. Acts as a negative regulator of anti-tumor immunity: indoles and kynurenic acid generated by Trp catabolism act as ligand and activate AHR, thereby promoting AHR-driven cancer cell motility and suppressing adaptive immunity. Regulates the circadian clock by inhibiting the basal and circadian expression of the core circadian component PER1. Inhibits PER1 by repressing the CLOCK-BMAL1 heterodimer mediated transcriptional activation of PER1. The heterodimer ARNT:AHR binds to core DNA sequence 5'-TGCGTG-3' within the dioxin response element (DRE) of target gene promoters and activates their transcription. The polypeptide is Aryl hydrocarbon receptor (Ahr) (Rattus norvegicus (Rat)).